Here is a 198-residue protein sequence, read N- to C-terminus: Recombination protein RecR (198 aa).

A C4-type zinc finger spans residues 57 to 72 (CSVCGHITDKDPCYIC). One can recognise a Toprim domain in the interval 80-175 (SVICVVQESK…KVTRIAHGLP (96 aa)).

It belongs to the RecR family.

In terms of biological role, may play a role in DNA repair. It seems to be involved in an RecBC-independent recombinational process of DNA repair. It may act with RecF and RecO. The sequence is that of Recombination protein RecR from Listeria welshimeri serovar 6b (strain ATCC 35897 / DSM 20650 / CCUG 15529 / CIP 8149 / NCTC 11857 / SLCC 5334 / V8).